A 194-amino-acid chain; its full sequence is Orotate phosphoribosyltransferase (194 aa).

Glutamate 117–serine 125 is a 5-phospho-alpha-D-ribose 1-diphosphate binding site. Orotate is bound by residues serine 121 and arginine 149.

The protein belongs to the purine/pyrimidine phosphoribosyltransferase family. PyrE subfamily. Homodimer. It depends on Mg(2+) as a cofactor.

The enzyme catalyses orotidine 5'-phosphate + diphosphate = orotate + 5-phospho-alpha-D-ribose 1-diphosphate. The protein operates within pyrimidine metabolism; UMP biosynthesis via de novo pathway; UMP from orotate: step 1/2. Catalyzes the transfer of a ribosyl phosphate group from 5-phosphoribose 1-diphosphate to orotate, leading to the formation of orotidine monophosphate (OMP). The polypeptide is Orotate phosphoribosyltransferase (Maricaulis maris (strain MCS10) (Caulobacter maris)).